The following is a 670-amino-acid chain: MTEYYGTLQKRPLEQESVAEGNGGLESGKKARGDSDVFAARSPENEDVDVDADADVDADADADADAEEDAQKDILEETKADELDEVVDEYEEKEVSSNFNGTASDHVGITSSNTGSTALAASSADTNSGSGNGTGTMATNGTLSDRQYAPQKPEHPIKLERRSVSRKYVFPVISKEDSLNARSYLKQFGSARFLDDYLPEDLNSLYVYHMIKLLGFQIKDKELMLAIQEVVHNADNDDSLPQKNSSETKNVSDTYTATYPSPSFEDPLEKKHAVRLIKDLQKAMNKVLSTRIRLTNFHTIDDFVAKLKTAKKIIVLTGAGISTSLGIPDFRSSEGFYSKLGDLGLNDPQDVFSLEVFTEDPSVFYNIAHMVLPPENMYSPLHSFIKMIQDKDKLLRNYTQNIDNLESYAGVEPEKMVQCHGSFATASCVTCHWKIQGERIFPNIRNLQLPICPYCYSKRLEFFKTKTDEELADGEDDDMDDHHGRSVPKSFGVLKPDITFFGEALPSKFHRLIREDVLQCDLLICIGTSLKVAPVSEIVNMIPAHVPQVLINKDPVKHAEFDLSLLGLCDDVAALVAQKCGWDIPHDNWNKLKNKVFDSEEVERGVYKVHPLNESPAELEAEEEKHLPLQQSTAALTPPVSLSADSPGRSSSSSPQPPTQTDIANNQTST.

2 disordered regions span residues 1–157 (MTEY…EHPI) and 235–263 (DNDD…PSPS). The segment covering 45-68 (NEDVDVDADADVDADADADADAEE) has biased composition (acidic residues). The segment covering 69–81 (DAQKDILEETKAD) has biased composition (basic and acidic residues). Residues 82 to 92 (ELDEVVDEYEE) are compositionally biased toward acidic residues. Residues 96 to 119 (SSNFNGTASDHVGITSSNTGSTAL) show a composition bias toward polar residues. Residues 120 to 142 (AASSADTNSGSGNGTGTMATNGT) are compositionally biased toward low complexity. The segment covering 239–261 (SLPQKNSSETKNVSDTYTATYPS) has biased composition (polar residues). Positions 293–583 (RLTNFHTIDD…ALVAQKCGWD (291 aa)) constitute a Deacetylase sirtuin-type domain. Residues 318–337 (GAGI…EGFY) and 400–403 (QNID) each bind NAD(+). Catalysis depends on His-420, which acts as the Proton acceptor. Positions 428, 431, 452, and 455 each coordinate Zn(2+). NAD(+) contacts are provided by residues 527-529 (GTS), 552-554 (NKD), and Cys-569. Positions 617–670 (AELEAEEEKHLPLQQSTAALTPPVSLSADSPGRSSSSSPQPPTQTDIANNQTST) are disordered. Low complexity predominate over residues 641-654 (SLSADSPGRSSSSS). Residues 659-670 (TQTDIANNQTST) show a composition bias toward polar residues.

It belongs to the sirtuin family. Class I subfamily. Zn(2+) serves as cofactor.

It localises to the nucleus. It catalyses the reaction N(6)-acetyl-L-lysyl-[protein] + NAD(+) + H2O = 2''-O-acetyl-ADP-D-ribose + nicotinamide + L-lysyl-[protein]. NAD-dependent deacetylase, which asts as a key regulator of gene expression believed to help form modified chromatin structures on the genes it regulates. It is involved in telomeric silencing and in hm mating type loci silencing. In Kluyveromyces lactis (strain ATCC 8585 / CBS 2359 / DSM 70799 / NBRC 1267 / NRRL Y-1140 / WM37) (Yeast), this protein is NAD-dependent histone deacetylase SIR2 (SIR2).